The sequence spans 641 residues: Soluble starch synthase 1, chloroplastic/amyloplastic (641 aa).

K145 contacts ADP-alpha-D-glucose.

The protein belongs to the glycosyltransferase 1 family. Bacterial/plant glycogen synthase subfamily. High expression in leaves and very low in tubers.

It is found in the plastid. Its subcellular location is the chloroplast. The protein localises to the amyloplast. The catalysed reaction is [(1-&gt;4)-alpha-D-glucosyl](n) + ADP-alpha-D-glucose = [(1-&gt;4)-alpha-D-glucosyl](n+1) + ADP + H(+). The protein operates within glycan biosynthesis; starch biosynthesis. Plays a minor role in starch synthesis in storage organs (tubers), but may contribute to the deposition of transient starch in chloroplasts of leaves. The sequence is that of Soluble starch synthase 1, chloroplastic/amyloplastic from Solanum tuberosum (Potato).